Consider the following 109-residue polypeptide: Serine protease inhibitor (109 aa).

An N-terminal signal peptide occupies residues 1 to 28; it reads MKMKLLQVHFVLLVSSSFLLGYTGMVTA. 5 disulfides stabilise this stretch: C43–C83, C52–C79, C58–C73, C62–C104, and C85–C98. One can recognise a TIL domain in the interval 43–104; it reads CRENEIFSQC…QGVCILENSC (62 aa).

The protein belongs to the serine protease inhibitor-like (TIL domain-containing) family. Ubiquitously expressed (at protein level), including in venom glands. Found more precisely in the epidermis, fat body, gut, muscle, and venom of worker bees.

It is found in the secreted. Functionally, dual role peptide that functions as a broad-spectrum antimicrobial peptide and antifibrinolytic toxin. Inhibits trypsin (IC(50)=375 nM), plasmin (IC(50)=2140 nM), and microbial serine proteases (subtilisin A (IC(50)=294 nM) and proteinase K (IC(50)=459 nM)). Exhibits antifibrinolytic activity by binding and inhibiting plasmin. Does not inhibit chymotrypsin, elastase or thrombin. Binds to microbial cell wall carbohydrates (LPS, mannan and N-acetyl-D-glucosamine) and shows antimicrobial activity (MIC=4.1 uM against B.thuringiensis, MIC=4.95 uM against E.coli, MIC=9.6 uM against the fungus B.bassiana). Does not show hemolytic activity. In Bombus ignitus (Bumblebee), this protein is Serine protease inhibitor.